The chain runs to 176 residues: Nuclear transcription factor Y subunit B-10 (176 aa).

The span at 1 to 15 (MAESQTGGGGGGSHE) shows a compositional bias: gly residues. Positions 1 to 29 (MAESQTGGGGGGSHESGGDQSPRSLNVRE) are disordered. Position 2 is an N-acetylalanine (alanine 2). Residues 34–40 (LPIANIS) mediate DNA binding. A subunit association domain (SAD) region spans residues 61 to 72 (MQECVSEFISFV). The tract at residues 121–176 (GDTKGSGKGGESSAKRDGQPSQVSQFSQVPQQGSFSQGPYGNSQGSNMMVQMPGTE) is disordered. Over residues 139 to 159 (QPSQVSQFSQVPQQGSFSQGP) the composition is skewed to low complexity. The span at 160-169 (YGNSQGSNMM) shows a compositional bias: polar residues.

It belongs to the NFYB/HAP3 subunit family. Heterotrimeric transcription factor composed of three components, NF-YA, NF-YB and NF-YC. NF-YB and NF-YC must interact and dimerize for NF-YA association and DNA binding. In terms of tissue distribution, expressed in the whole plant, except roots.

The protein resides in the nucleus. Component of the NF-Y/HAP transcription factor complex. The NF-Y complex stimulates the transcription of various genes by recognizing and binding to a CCAAT motif in promoters. The polypeptide is Nuclear transcription factor Y subunit B-10 (NFYB10) (Arabidopsis thaliana (Mouse-ear cress)).